The primary structure comprises 444 residues: NADH-ubiquinone oxidoreductase chain 4 (444 aa).

A run of 13 helical transmembrane segments spans residues 4 to 24, 28 to 48, 53 to 73, 87 to 107, 109 to 129, 141 to 161, 173 to 193, 212 to 232, 245 to 265, 272 to 294, 306 to 326, 330 to 350, and 373 to 393; these read YLFM…WWLV, IFLL…LSMI, GVDF…CLMI, NFFV…FSSL, LFSF…LILG, VYLM…LFSI, LIDF…AFLV, PISG…YGIF, FNYF…FVCF, SLIA…TMNW, GHGI…ELLG, LLIN…WFLL, and IISW…FSAV.

Belongs to the complex I subunit 4 family.

It localises to the mitochondrion membrane. The catalysed reaction is a ubiquinone + NADH + 5 H(+)(in) = a ubiquinol + NAD(+) + 4 H(+)(out). In terms of biological role, core subunit of the mitochondrial membrane respiratory chain NADH dehydrogenase (Complex I) that is believed to belong to the minimal assembly required for catalysis. Complex I functions in the transfer of electrons from NADH to the respiratory chain. The immediate electron acceptor for the enzyme is believed to be ubiquinone. The chain is NADH-ubiquinone oxidoreductase chain 4 (ND4) from Locusta migratoria (Migratory locust).